The chain runs to 858 residues: Low-density lipoprotein receptor-related protein 12 (858 aa).

Positions 1–32 are cleaved as a signal peptide; that stretch reads MARRWSTKESQRRGSAWLLLFLAGVYGNGALA. The Extracellular segment spans residues 33–492; that stretch reads ELSENVHISG…ENCPVIVPTR (460 aa). 9 disulfide bridges follow: C47–C76, C103–C122, C166–C178, C173–C191, C185–C200, C215–C232, C222–C245, C239–C254, and C259–C285. Residues 47–159 form the CUB 1 domain; the sequence is CGESPEQIRA…KGFRLAYFSG (113 aa). N75 carries N-linked (GlcNAc...) asparagine glycosylation. 2 LDL-receptor class A domains span residues 165-201 and 214-255; these read DCAC…EVCA and PCAY…IDCD. The CUB 2 domain maps to 259-372; sequence CGQWLKYFYG…RGFNATYQVD (114 aa). 2 N-linked (GlcNAc...) asparagine glycosylation sites follow: N284 and N366. 3 consecutive LDL-receptor class A domains span residues 374 to 411, 412 to 449, and 450 to 486; these read FCLP…INCT, MCQK…KNCF, and FCQP…ENCP. 9 disulfides stabilise this stretch: C375/C388, C382/C401, C395/C410, C413/C426, C420/C439, C433/C448, C451/C463, C458/C476, and C470/C485. A glycan (N-linked (GlcNAc...) asparagine) is linked at N409. N441 carries an N-linked (GlcNAc...) asparagine glycan. The helical transmembrane segment at 493–513 threads the bilayer; sequence VITAAVIGSLICGLLLVIALG. The Cytoplasmic segment spans residues 514-858; sequence CTCKLYSLRM…TSDDEALLLC (345 aa). 2 disordered regions span residues 619–721 and 746–767; these read ALVS…VSPA and SSST…SGRE. The span at 712–721 shows a compositional bias: low complexity; sequence SVEAPSVSPA. Over residues 746–755 the composition is skewed to polar residues; the sequence is SSSTTQNRSP.

The protein belongs to the LDLR family. May interact with RACK1, ZFYVE9 and NMRK2.

It localises to the membrane. Its subcellular location is the coated pit. Probable receptor, which may be involved in the internalization of lipophilic molecules and/or signal transduction. May act as a tumor suppressor. In Mus musculus (Mouse), this protein is Low-density lipoprotein receptor-related protein 12 (Lrp12).